A 197-amino-acid chain; its full sequence is Glycerol-3-phosphate acyltransferase (197 aa).

Transmembrane regions (helical) follow at residues 1–21 (MNIL…GFLI), 50–70 (WPAL…VKIA), 77–97 (GLIE…PIWL), 111–131 (MFLA…LIVL), 136–156 (FVSL…FFYL), and 157–177 (GNYM…VIWK).

This sequence belongs to the PlsY family. Probably interacts with PlsX.

It localises to the cell inner membrane. It carries out the reaction an acyl phosphate + sn-glycerol 3-phosphate = a 1-acyl-sn-glycero-3-phosphate + phosphate. Its pathway is lipid metabolism; phospholipid metabolism. Catalyzes the transfer of an acyl group from acyl-phosphate (acyl-PO(4)) to glycerol-3-phosphate (G3P) to form lysophosphatidic acid (LPA). This enzyme utilizes acyl-phosphate as fatty acyl donor, but not acyl-CoA or acyl-ACP. The polypeptide is Glycerol-3-phosphate acyltransferase (Prochlorococcus marinus (strain MIT 9312)).